Reading from the N-terminus, the 599-residue chain is Proline--tRNA ligase (599 aa).

It belongs to the class-II aminoacyl-tRNA synthetase family. ProS type 1 subfamily. Homodimer.

The protein resides in the cytoplasm. It catalyses the reaction tRNA(Pro) + L-proline + ATP = L-prolyl-tRNA(Pro) + AMP + diphosphate. Its function is as follows. Catalyzes the attachment of proline to tRNA(Pro) in a two-step reaction: proline is first activated by ATP to form Pro-AMP and then transferred to the acceptor end of tRNA(Pro). As ProRS can inadvertently accommodate and process non-cognate amino acids such as alanine and cysteine, to avoid such errors it has two additional distinct editing activities against alanine. One activity is designated as 'pretransfer' editing and involves the tRNA(Pro)-independent hydrolysis of activated Ala-AMP. The other activity is designated 'posttransfer' editing and involves deacylation of mischarged Ala-tRNA(Pro). The misacylated Cys-tRNA(Pro) is not edited by ProRS. This chain is Proline--tRNA ligase, found in Prochlorococcus marinus (strain MIT 9303).